The following is a 200-amino-acid chain: MKIILATSNKHKVLELKEILKDFEIYAFDEVLTPFEIEENGKTFKENALIKARAVFNALDEKQKKDFIALSDDSGICVDVLEGNPGIYSARFSGKGDDKSNRDKLVNEMIKKGFNQSRAHYVAAIAMVGLMGEFSTHGTMYGKVIDTEKGENGFGYDSLFIPKGFDKTLAQLSVDEKNNISHRFKALELAKIILKILTKG.

7–12 (TSNKHK) is a binding site for substrate. Positions 38 and 73 each coordinate Mg(2+). Asp73 (proton acceptor) is an active-site residue. Substrate contacts are provided by residues Ser74, 154–157 (FGYD), Lys177, and 182–183 (HR).

This sequence belongs to the HAM1 NTPase family. In terms of assembly, homodimer. Requires Mg(2+) as cofactor.

It carries out the reaction XTP + H2O = XMP + diphosphate + H(+). It catalyses the reaction dITP + H2O = dIMP + diphosphate + H(+). The catalysed reaction is ITP + H2O = IMP + diphosphate + H(+). In terms of biological role, pyrophosphatase that catalyzes the hydrolysis of nucleoside triphosphates to their monophosphate derivatives, with a high preference for the non-canonical purine nucleotides XTP (xanthosine triphosphate), dITP (deoxyinosine triphosphate) and ITP. Seems to function as a house-cleaning enzyme that removes non-canonical purine nucleotides from the nucleotide pool, thus preventing their incorporation into DNA/RNA and avoiding chromosomal lesions. The chain is dITP/XTP pyrophosphatase from Campylobacter jejuni subsp. doylei (strain ATCC BAA-1458 / RM4099 / 269.97).